The sequence spans 398 residues: Metalloprotease MmpA (398 aa).

Histidine 22 is a Zn(2+) binding site. Residue glutamate 23 is part of the active site. A Zn(2+)-binding site is contributed by histidine 26. 3 helical membrane-spanning segments follow: residues 117–139 (FIAV…VILV), 316–338 (QFWL…IPVL), and 362–381 (AAGF…FAAW). The PDZ domain maps to 130-203 (AILVFAVILV…MPIDFAVERD (74 aa)).

This sequence belongs to the peptidase M50B family. Zn(2+) is required as a cofactor.

It localises to the cell inner membrane. Involved in the regulated intramembrane proteolysis (RIP) of the short isoform of PodJ protein (PodJS), during the swarmer-to-stalked transition. The cleavage occurs near or within the single transmembrane of PodJS thereby releasing the N-terminal segment into the cytoplasm for subsequent degradation. It contributes to preserve asymmetry in the next cell cycle through sequential degradation. The sequence is that of Metalloprotease MmpA (mmpA) from Caulobacter vibrioides (strain ATCC 19089 / CIP 103742 / CB 15) (Caulobacter crescentus).